A 178-amino-acid polypeptide reads, in one-letter code: Large ribosomal subunit protein uL6 (178 aa).

It belongs to the universal ribosomal protein uL6 family. Part of the 50S ribosomal subunit.

In terms of biological role, this protein binds to the 23S rRNA, and is important in its secondary structure. It is located near the subunit interface in the base of the L7/L12 stalk, and near the tRNA binding site of the peptidyltransferase center. The polypeptide is Large ribosomal subunit protein uL6 (Halalkalibacterium halodurans (strain ATCC BAA-125 / DSM 18197 / FERM 7344 / JCM 9153 / C-125) (Bacillus halodurans)).